The chain runs to 873 residues: Aminopeptidase M1-D (873 aa).

Positions 96–203 (LGEGVLAMRF…MSTYLVAIVV (108 aa)) are required for membrane association. Substrate contacts are provided by residues Glu136 and 269–273 (GAMEN). Zn(2+) is bound at residue His305. Residue Glu306 is the Proton acceptor of the active site. Residues His309 and Glu328 each contribute to the Zn(2+) site. The Dileucine internalization motif motif lies at 721 to 722 (LL).

This sequence belongs to the peptidase M1 family. In terms of assembly, homodimer. Zn(2+) is required as a cofactor.

Its subcellular location is the membrane. It is found in the microsome membrane. The protein localises to the cytoplasm. It catalyses the reaction Release of an N-terminal amino acid, Xaa-|-Yaa- from a peptide, amide or arylamide. Xaa is preferably Ala, but may be most amino acids including Pro (slow action). When a terminal hydrophobic residue is followed by a prolyl residue, the two may be released as an intact Xaa-Pro dipeptide.. This is Aminopeptidase M1-D from Oryza sativa subsp. japonica (Rice).